The primary structure comprises 147 residues: Myoglobin (147 aa).

The Globin domain occupies Ala-2–Lys-141. His-60 serves as a coordination point for nitrite. Residue His-60 coordinates O2. Residue His-89 coordinates heme b.

It belongs to the globin family. As to quaternary structure, monomeric.

It is found in the cytoplasm. Its subcellular location is the sarcoplasm. The enzyme catalyses Fe(III)-heme b-[protein] + nitric oxide + H2O = Fe(II)-heme b-[protein] + nitrite + 2 H(+). The catalysed reaction is H2O2 + AH2 = A + 2 H2O. Its function is as follows. Monomeric heme protein which primary function is to store oxygen and facilitate its diffusion within muscle tissues. Reversibly binds oxygen through a pentacoordinated heme iron and enables its timely and efficient release as needed during periods of heightened demand. Depending on the oxidative conditions of tissues and cells, and in addition to its ability to bind oxygen, it also has a nitrite reductase activity whereby it regulates the production of bioactive nitric oxide. Under stress conditions, like hypoxia and anoxia, it also protects cells against reactive oxygen species thanks to its pseudoperoxidase activity. The chain is Myoglobin (mb) from Notothenia neglecta (Yellowbelly rockcod).